The sequence spans 288 residues: Large ribosomal subunit protein uL2 (288 aa).

Disordered stretches follow at residues 1–46 (MAIH…RNVY) and 226–288 (MVMN…RGKK). The segment covering 235-248 (NGGGQGKSKGGGGR) has biased composition (gly residues). Basic residues predominate over residues 279–288 (HNGRKPRGKK).

This sequence belongs to the universal ribosomal protein uL2 family. Part of the 50S ribosomal subunit. Forms a bridge to the 30S subunit in the 70S ribosome.

In terms of biological role, one of the primary rRNA binding proteins. Required for association of the 30S and 50S subunits to form the 70S ribosome, for tRNA binding and peptide bond formation. It has been suggested to have peptidyltransferase activity; this is somewhat controversial. Makes several contacts with the 16S rRNA in the 70S ribosome. This chain is Large ribosomal subunit protein uL2, found in Opitutus terrae (strain DSM 11246 / JCM 15787 / PB90-1).